Here is a 377-residue protein sequence, read N- to C-terminus: Chaperone protein DnaJ (377 aa).

The 66-residue stretch at 5–70 (DYYEVLGVGK…EKKAAYDQYG (66 aa)) folds into the J domain. A CR-type zinc finger spans residues 137–215 (GHEAQIRVPH…CHGQGKLKSQ (79 aa)). Residues Cys150, Cys153, Cys167, Cys170, Cys189, Cys192, Cys203, and Cys206 each coordinate Zn(2+). CXXCXGXG motif repeat units follow at residues 150–157 (CDHCHGNG), 167–174 (CPTCHGAG), 189–196 (CPKCHGSG), and 203–210 (CTKCHGQG).

The protein belongs to the DnaJ family. In terms of assembly, homodimer. The cofactor is Zn(2+).

It localises to the cytoplasm. In terms of biological role, participates actively in the response to hyperosmotic and heat shock by preventing the aggregation of stress-denatured proteins and by disaggregating proteins, also in an autonomous, DnaK-independent fashion. Unfolded proteins bind initially to DnaJ; upon interaction with the DnaJ-bound protein, DnaK hydrolyzes its bound ATP, resulting in the formation of a stable complex. GrpE releases ADP from DnaK; ATP binding to DnaK triggers the release of the substrate protein, thus completing the reaction cycle. Several rounds of ATP-dependent interactions between DnaJ, DnaK and GrpE are required for fully efficient folding. Also involved, together with DnaK and GrpE, in the DNA replication of plasmids through activation of initiation proteins. The chain is Chaperone protein DnaJ from Cupriavidus taiwanensis (strain DSM 17343 / BCRC 17206 / CCUG 44338 / CIP 107171 / LMG 19424 / R1) (Ralstonia taiwanensis (strain LMG 19424)).